The sequence spans 257 residues: Peptide methionine sulfoxide reductase (257 aa).

The disordered stretch occupies residues 61–88; the sequence is LGFGSRPQPDPAASSAIAQGPDDDVPSP. Ser-244 carries the post-translational modification Phosphoserine.

Belongs to the MsrA Met sulfoxide reductase family.

It catalyses the reaction L-methionyl-[protein] + [thioredoxin]-disulfide + H2O = L-methionyl-(S)-S-oxide-[protein] + [thioredoxin]-dithiol. It carries out the reaction [thioredoxin]-disulfide + L-methionine + H2O = L-methionine (S)-S-oxide + [thioredoxin]-dithiol. Functionally, has an important function as a repair enzyme for proteins that have been inactivated by oxidation. Catalyzes the reversible oxidation-reduction of methionine sulfoxide in proteins to methionine. The chain is Peptide methionine sulfoxide reductase (PMSR) from Brassica napus (Rape).